Here is a 137-residue protein sequence, read N- to C-terminus: Fluoride-specific ion channel FluC 4 (137 aa).

4 helical membrane-spanning segments follow: residues 20-40, 43-63, 83-103, and 110-130; these read AAIGALLRFLSGWVIVAILGA, LWGTSFVNIVGSFIIMFFATL, GLCGGLTTFSSMSLDTFLLVL, and ALAYLCGLVFLSLSAAMLGLI. Na(+) is bound by residues Gly86 and Thr89.

This sequence belongs to the fluoride channel Fluc/FEX (TC 1.A.43) family.

It is found in the cell inner membrane. The enzyme catalyses fluoride(in) = fluoride(out). Its activity is regulated as follows. Na(+) is not transported, but it plays an essential structural role and its presence is essential for fluoride channel function. Fluoride-specific ion channel. Important for reducing fluoride concentration in the cell, thus reducing its toxicity. In Brucella suis biovar 1 (strain 1330), this protein is Fluoride-specific ion channel FluC 4.